Reading from the N-terminus, the 164-residue chain is Putative anionic 4-hydroxy-benzoate permease (164 aa).

The interval 1–30 (CGRRRGSLAWPDASSPSANPRPGAGAAESS) is disordered. 3 consecutive transmembrane segments (helical) span residues 62 to 82 (LWVA…LMFM), 97 to 117 (GMAQ…VGGL), and 126 to 146 (PALT…MLAG).

It belongs to the major facilitator superfamily. Cyanate porter (TC 2.A.1.17) family.

It is found in the cell membrane. Its function is as follows. May be involved in uptake of anionic 4-hydroxy-benzoate. The chain is Putative anionic 4-hydroxy-benzoate permease from Thauera aromatica.